The following is an 84-amino-acid chain: Polyketide-8 synthase acyl carrier protein 1 (84 aa).

Positions 7–82 constitute a Carrier domain; sequence AARKQEIKEI…GVYVVVSEAA (76 aa). O-(pantetheine 4'-phosphoryl)serine is present on Ser-42.

In terms of processing, 4'-phosphopantetheine is transferred from CoA to a specific serine of the apo-ACP-like protein.

Its function is as follows. Acyl carrier protein. In Streptomyces avermitilis (strain ATCC 31267 / DSM 46492 / JCM 5070 / NBRC 14893 / NCIMB 12804 / NRRL 8165 / MA-4680), this protein is Polyketide-8 synthase acyl carrier protein 1.